The sequence spans 689 residues: Collagen alpha-2(IX) chain (689 aa).

Positions 1 to 23 (MAAATASPRSLLVLLQVVVLALA) are cleaved as a signal peptide. Positions 26 to 518 (RGPPGERGPP…QPGRQGVEGR (493 aa)) are disordered. The interval 27–163 (GPPGERGPPG…PGKPGRPGTI (137 aa)) is triple-helical region 4 (COL4). A compositionally biased stretch (pro residues) spans 31–43 (ERGPPGPPGPPGV). A compositionally biased stretch (low complexity) spans 44–56 (PGSDGIDGDNGPP). 2 stretches are compositionally biased toward pro residues: residues 106 to 127 (LPGP…PGPV) and 144 to 157 (PDGP…PGKP). 4-hydroxyproline is present on proline 160. The segment at 164–180 (QGLEGSADFLCPTNCPP) is nonhelical region 4 (NC4). O-linked (Xyl...) (glycosaminoglycan) serine glycosylation occurs at serine 169. The tract at residues 181 to 519 (GMKGPPGLQG…PGRQGVEGRD (339 aa)) is triple-helical region 3 (COL3). Lysine 183 is modified (5-hydroxylysine). Residue lysine 183 is glycosylated (O-linked (Gal...) hydroxylysine). The segment covering 343–352 (GTKGGPGDQG) has biased composition (gly residues). 2 stretches are compositionally biased toward low complexity: residues 353-366 (EPGP…SGPP) and 393-413 (RGPV…EQGP). The interval 520 to 549 (ATDQHIVDVALKMLQEQLAEVAVSAKREAL) is nonhelical region 3 (NC3). The interval 550-632 (GAVGMMGPPG…PGLPGRPGQA (83 aa)) is triple-helical region 2 (COL2). The tract at residues 554 to 663 (MMGPPGPPGP…LPGPVGLPGF (110 aa)) is disordered. Residues 557–566 (PPGPPGPPGY) are compositionally biased toward pro residues. Positions 599–611 (KRGEKGDPGEVGR) are enriched in basic and acidic residues. The tract at residues 633 to 634 (IN) is nonhelical region 2 (NC2). The segment at 635-664 (GKDGDRGSPGAPGEAGRPGLPGPVGLPGFC) is triple-helical region 1 (COL1). The nonhelical region 1 (NC1) stretch occupies residues 665 to 689 (EPAACLGASAYASARLTEPGSIKGP).

The protein belongs to the fibril-associated collagens with interrupted helices (FACIT) family. Heterotrimer of an alpha 1(IX), an alpha 2(IX) and an alpha 3(IX) chain. The chains are linked to each other by interchain disulfide bonds. Trimers are also cross-linked via hydroxylysines. In terms of processing, covalently linked to the telopeptides of type II collagen by lysine-derived cross-links. Post-translationally, prolines at the third position of the tripeptide repeating unit (G-X-Y) are hydroxylated in some or all of the chains.

The protein resides in the secreted. Its subcellular location is the extracellular space. The protein localises to the extracellular matrix. Structural component of hyaline cartilage and vitreous of the eye. The chain is Collagen alpha-2(IX) chain from Homo sapiens (Human).